The primary structure comprises 492 residues: Cytoplasmic dynein 1 light intermediate chain 2 (492 aa).

Residue 61–68 participates in ATP binding; that stretch reads GEDGSGKT. Disordered regions lie at residues 187-206, 371-423, and 437-492; these read PEEG…SGSD, AKQP…KNNA, and LSKK…ENEA. S194 bears the Phosphoserine mark. The segment covering 371 to 381 has biased composition (polar residues); that stretch reads AKQPATPTRAS. Residues S383 and S391 each carry the phosphoserine modification. R397 is modified (omega-N-methylarginine). Residues 400–412 show a composition bias toward low complexity; that stretch reads PASVPSSSPGTSV. T441 is modified (phosphothreonine). A phosphoserine mark is found at S443 and S446. The segment covering 452–469 has biased composition (polar residues); sequence VQSTAKKSGQKTVLSNVQ. The span at 471–480 shows a compositional bias: basic and acidic residues; the sequence is ELDRMTRKPD. The span at 482–492 shows a compositional bias: polar residues; it reads MVTNSSTENEA.

The protein belongs to the dynein light intermediate chain family. As to quaternary structure, homodimer. The cytoplasmic dynein 1 complex consists of two catalytic heavy chains (HCs) and a number of non-catalytic subunits presented by intermediate chains (ICs), light intermediate chains (LICs) and light chains (LCs); the composition seems to vary in respect to the IC, LIC and LC composition. The heavy chain homodimer serves as a scaffold for the probable homodimeric assembly of the respective non-catalytic subunits. The ICs and LICs bind directly to the HC dimer and the LCs assemble on the IC dimer. Interacts with DYNC1H1; DYNC1LI1 and DYNC1LI2 bind mutually exclusive to DYNC1H.

It is found in the cytoplasm. Its subcellular location is the cytoskeleton. In terms of biological role, acts as one of several non-catalytic accessory components of the cytoplasmic dynein 1 complex that are thought to be involved in linking dynein to cargos and to adapter proteins that regulate dynein function. Cytoplasmic dynein 1 acts as a motor for the intracellular retrograde motility of vesicles and organelles along microtubules. May play a role in binding dynein to membranous organelles or chromosomes. The protein is Cytoplasmic dynein 1 light intermediate chain 2 of Homo sapiens (Human).